The chain runs to 554 residues: 2-succinyl-5-enolpyruvyl-6-hydroxy-3-cyclohexene-1-carboxylate synthase (554 aa).

This sequence belongs to the TPP enzyme family. MenD subfamily. Homodimer. Requires Mg(2+) as cofactor. The cofactor is Mn(2+). It depends on thiamine diphosphate as a cofactor.

The enzyme catalyses isochorismate + 2-oxoglutarate + H(+) = 5-enolpyruvoyl-6-hydroxy-2-succinyl-cyclohex-3-ene-1-carboxylate + CO2. It functions in the pathway quinol/quinone metabolism; 1,4-dihydroxy-2-naphthoate biosynthesis; 1,4-dihydroxy-2-naphthoate from chorismate: step 2/7. The protein operates within quinol/quinone metabolism; menaquinone biosynthesis. Its function is as follows. Catalyzes the thiamine diphosphate-dependent decarboxylation of 2-oxoglutarate and the subsequent addition of the resulting succinic semialdehyde-thiamine pyrophosphate anion to isochorismate to yield 2-succinyl-5-enolpyruvyl-6-hydroxy-3-cyclohexene-1-carboxylate (SEPHCHC). The sequence is that of 2-succinyl-5-enolpyruvyl-6-hydroxy-3-cyclohexene-1-carboxylate synthase from Renibacterium salmoninarum (strain ATCC 33209 / DSM 20767 / JCM 11484 / NBRC 15589 / NCIMB 2235).